Reading from the N-terminus, the 115-residue chain is MDPLIQELTKEQLRDDMPEFRAGDTVRVHVRVVEGTHERIQIFEGVVIKKRGTGIGATYTVRKIASGVGVERTFPVNTPRVAKVEVIRHGRVRRAKLYYLRTRSGKAARITERRR.

It belongs to the bacterial ribosomal protein bL19 family.

Functionally, this protein is located at the 30S-50S ribosomal subunit interface and may play a role in the structure and function of the aminoacyl-tRNA binding site. The chain is Large ribosomal subunit protein bL19 from Lactobacillus delbrueckii subsp. bulgaricus (strain ATCC BAA-365 / Lb-18).